Consider the following 418-residue polypeptide: Serine hydroxymethyltransferase (418 aa).

Residues leucine 121 and 125 to 127 (GHL) contribute to the (6S)-5,6,7,8-tetrahydrofolate site. At lysine 230 the chain carries N6-(pyridoxal phosphate)lysine. Residues glutamate 246 and 355–357 (SPF) contribute to the (6S)-5,6,7,8-tetrahydrofolate site.

The protein belongs to the SHMT family. Homodimer. Pyridoxal 5'-phosphate is required as a cofactor.

It is found in the cytoplasm. It catalyses the reaction (6R)-5,10-methylene-5,6,7,8-tetrahydrofolate + glycine + H2O = (6S)-5,6,7,8-tetrahydrofolate + L-serine. It functions in the pathway one-carbon metabolism; tetrahydrofolate interconversion. The protein operates within amino-acid biosynthesis; glycine biosynthesis; glycine from L-serine: step 1/1. Catalyzes the reversible interconversion of serine and glycine with tetrahydrofolate (THF) serving as the one-carbon carrier. This reaction serves as the major source of one-carbon groups required for the biosynthesis of purines, thymidylate, methionine, and other important biomolecules. Also exhibits THF-independent aldolase activity toward beta-hydroxyamino acids, producing glycine and aldehydes, via a retro-aldol mechanism. The chain is Serine hydroxymethyltransferase from Streptococcus pneumoniae (strain Hungary19A-6).